A 196-amino-acid polypeptide reads, in one-letter code: Glycerol-3-phosphate acyltransferase (196 aa).

5 consecutive transmembrane segments (helical) span residues 4 to 24, 56 to 76, 80 to 100, 114 to 134, and 155 to 175; these read LTLTMIIAAYLIGSISSAILV, ATVLFLDILKGTIPVWGAYFL, SLYLGFIGVSACLGHMYPIFF, TLLPIGFTLGGLLILTWVLVV, and VYFLKPLYVYPTLMLSALILF.

This sequence belongs to the PlsY family. In terms of assembly, probably interacts with PlsX.

The protein localises to the cell inner membrane. It catalyses the reaction an acyl phosphate + sn-glycerol 3-phosphate = a 1-acyl-sn-glycero-3-phosphate + phosphate. Its pathway is lipid metabolism; phospholipid metabolism. Its function is as follows. Catalyzes the transfer of an acyl group from acyl-phosphate (acyl-PO(4)) to glycerol-3-phosphate (G3P) to form lysophosphatidic acid (LPA). This enzyme utilizes acyl-phosphate as fatty acyl donor, but not acyl-CoA or acyl-ACP. In Colwellia psychrerythraea (strain 34H / ATCC BAA-681) (Vibrio psychroerythus), this protein is Glycerol-3-phosphate acyltransferase.